The chain runs to 269 residues: Putative aga operon transcriptional repressor (269 aa).

The HTH deoR-type domain maps to 15 to 70 (TSERREQIIQRLRQQGSVQVNDLSALYGVSTVTIRNDLAFLEKQGIAVRAYGGALI). Positions 32–51 (VQVNDLSALYGVSTVTIRND) form a DNA-binding region, H-T-H motif.

Probable repressor for the aga operon for N-acetyl galactosamine transport and metabolism. In Escherichia coli O157:H7, this protein is Putative aga operon transcriptional repressor (agaR).